The sequence spans 289 residues: ATP synthase gamma chain (289 aa).

Belongs to the ATPase gamma chain family. In terms of assembly, F-type ATPases have 2 components, CF(1) - the catalytic core - and CF(0) - the membrane proton channel. CF(1) has five subunits: alpha(3), beta(3), gamma(1), delta(1), epsilon(1). CF(0) has three main subunits: a, b and c.

Its subcellular location is the cell membrane. In terms of biological role, produces ATP from ADP in the presence of a proton gradient across the membrane. The gamma chain is believed to be important in regulating ATPase activity and the flow of protons through the CF(0) complex. The protein is ATP synthase gamma chain of Lactococcus lactis subsp. cremoris (strain MG1363).